Reading from the N-terminus, the 157-residue chain is SsrA-binding protein (157 aa).

The interval 130-157 (KAEHDKRDTIKEREGKREVERVMKSRHR) is disordered.

It belongs to the SmpB family.

The protein resides in the cytoplasm. In terms of biological role, required for rescue of stalled ribosomes mediated by trans-translation. Binds to transfer-messenger RNA (tmRNA), required for stable association of tmRNA with ribosomes. tmRNA and SmpB together mimic tRNA shape, replacing the anticodon stem-loop with SmpB. tmRNA is encoded by the ssrA gene; the 2 termini fold to resemble tRNA(Ala) and it encodes a 'tag peptide', a short internal open reading frame. During trans-translation Ala-aminoacylated tmRNA acts like a tRNA, entering the A-site of stalled ribosomes, displacing the stalled mRNA. The ribosome then switches to translate the ORF on the tmRNA; the nascent peptide is terminated with the 'tag peptide' encoded by the tmRNA and targeted for degradation. The ribosome is freed to recommence translation, which seems to be the essential function of trans-translation. The sequence is that of SsrA-binding protein from Acidovorax sp. (strain JS42).